Consider the following 307-residue polypeptide: Ribosomal RNA small subunit methyltransferase H (307 aa).

Residues 33-35, aspartate 52, leucine 83, aspartate 97, and glutamine 104 each bind S-adenosyl-L-methionine; that span reads AGH.

It belongs to the methyltransferase superfamily. RsmH family.

It is found in the cytoplasm. The catalysed reaction is cytidine(1402) in 16S rRNA + S-adenosyl-L-methionine = N(4)-methylcytidine(1402) in 16S rRNA + S-adenosyl-L-homocysteine + H(+). Specifically methylates the N4 position of cytidine in position 1402 (C1402) of 16S rRNA. The polypeptide is Ribosomal RNA small subunit methyltransferase H (Sulfurovum sp. (strain NBC37-1)).